The primary structure comprises 128 residues: Glyoxylase-like domain-containing protein (128 aa).

One can recognise a VOC domain in the interval 6-125 (QISGIEIPAT…EGNTHAICTR (120 aa)).

It functions in the pathway mycotoxin biosynthesis. Glyoxylase-like domain-containing protein; part of the gene cluster that mediates the biosynthesis of the selective antifungal agent ascochitine, an o-quinone methide that plays a possible protective role against other microbial competitors in nature and is considered to be important for pathogenicity of legume-associated Didymella species. The pathway probably begins with the synthesis of a keto-aldehyde intermediate by the ascochitine non-reducing polyketide synthase pksAC from successive condensations of 4 malonyl-CoA units, presumably with a simple acetyl-CoA starter unit. Release of the keto-aldehyde intermediate is consistent with the presence of the C-terminal reductive release domain. The HR-PKS (orf7) probably makes a diketide starter unit which is passed to the non-reducing polyketide synthase pksAC for further extension, producing ascochital and ascochitine. The aldehyde dehydrogenase (orf1), the 2-oxoglutarate-dependent dioxygenase (orf3) and the dehydrogenase (orf9) are probably involved in subsequent oxidations of methyl groups to the carboxylic acid of the heterocyclic ring. The ascochitine gene cluster also includes a gene encoding a short peptide with a cupin domain (orf2) that is often found in secondary metabolite gene clusters and which function has still to be determined. The sequence is that of Glyoxylase-like domain-containing protein from Didymella fabae (Leaf and pod spot disease fungus).